A 1152-amino-acid polypeptide reads, in one-letter code: MRKFNIRKVLDGLTAGSSSASQQQQQQQHPPGNREPEIQETLQSEHFQLCKTVRHGFPYQPSALAFDPVQKILAVGTQTGALRLFGRPGVECYCQHDSGAAVIQLQFLINEGALVSALADDTLHLWNLRQKRPAVLHSLKFCRERVTFCHLPFQSKWLYVGTERGNIHIVNVESFTLSGYVIMWNKAIELSSKAHPGPVVHISDNPMDEGKLLIGFESGTVVLWDLKSKKADYRYTYDEAIHSVAWHHEGKQFICSHSDGTLTIWNVRSPAKPVQTITPHGKQLKDGKKPEPCKPILKVELKTTRSGEPFIILSGGLSYDTVGRRPCLTVMHGKSTAVLEMDYSIVDFLTLCETPYPNDFQEPYAVVVLLEKDLVLIDLAQNGYPIFENPYPLSIHESPVTCCEYFADCPVDLIPALYSVGARQKRQGYSKKEWPINGGNWGLGAQSYPEIIITGHADGSVKFWDASAITLQVLYKLKTSKVFEKSRNKDDRQNTDIVDEDPYAIQIISWCPESRMLCIAGVSAHVIIYRFSKQEVLTEVIPMLEVRLLYEINDVDTPEGEQPPPLSTPVGSSNPQPIPPQSHPSTSSSSSDGLRDNVPCLKVKNSPLKQSPGYQTELVIQLVWVGGEPPQQITSLALNSSYGLVVFGNCNGIAMVDYLQKAVLLNLSTIELYGSNDPYRREPRSPRKSRQPSGAGLCDITEGTVVPEDRCKSPTSGSSSPHNSDDEQKVNNFIEKVKTQSRKFSKMVANDLAKMSRKLSLPTDLKPDLDVKDNSFSRSRSSSVTSIDKESRETISALHFCETLTRKADSSPSPCLWVGTTVGTAFVITLNLPPGPEQRLLQPVIVSPSGTILRLKGAILRMAFLDATGCLMSPAYEPWKEHNVAEEKDEKEKLKKRRPVSVSPSSSQEISENQYAVICSEKQAKVMSLPTQSCAYKQNITETSFVLRGDIVALSNSVCLACFCANGHIMTFSLPSLRPLLDVYYLPLTNMRIARTFCFANNGQALYLVSPTEIQRLTYSQETCENLQEMLGELFTPVETPEAPNRGFFKGLFGGGAQSLDREELFGESSSGKASRSLAQHIPGPGGIEGVKGAASGVVGELARARLALDERGQKLSDLEERTAAMMSSADSFSKHAHEMMLKYKDKKWYQF.

Residues 14–35 (TAGSSSASQQQQQQQHPPGNRE) form a disordered region. Over residues 17 to 28 (SSSASQQQQQQQ) the composition is skewed to low complexity. 10 WD repeats span residues 62–95 (SALA…CYCQ), 102–141 (VIQL…SLKF), 146–182 (VTFC…GYVI), 201–235 (HISD…DYRY), 241–273 (IHSV…PAKP), 295–337 (PILK…KSTA), 345–379 (IVDF…LIDL), 401–478 (TCCE…YKLK), 506–620 (QIIS…ELVI), and 634–696 (TSLA…SGAG). Disordered regions lie at residues 555–596 (VDTP…GLRD) and 675–731 (SNDP…QKVN). Ser-693 carries the phosphoserine modification. Residues 713 to 722 (SPTSGSSSPH) show a composition bias toward low complexity. Phosphoserine is present on residues Ser-724 and Ser-760. Thr-763 is subject to Phosphothreonine. Ser-783 bears the Phosphoserine mark. Thr-785 carries the phosphothreonine modification. The residue at position 786 (Ser-786) is a Phosphoserine. WD repeat units follow at residues 795-852 (ISAL…SGTI), 861-935 (RMAF…QSCA), 940-984 (ITET…LDVY), and 998-1021 (CFAN…TYSQ). A compositionally biased stretch (basic and acidic residues) spans 883–893 (NVAEEKDEKEK). The interval 883–907 (NVAEEKDEKEKLKKRRPVSVSPSSS) is disordered. Ser-901 and Ser-903 each carry phosphoserine. Phosphothreonine is present on Thr-1040. Phosphoserine is present on residues Ser-1059 and Ser-1132. The v-SNARE coiled-coil homology domain occupies 1087-1147 (GIEGVKGAAS…HEMMLKYKDK (61 aa)).

This sequence belongs to the WD repeat L(2)GL family. As to quaternary structure, part of a complex that contains STX1, STXBP5, SNAP25 and SYT1. Interacts with STX1A and STX4A via its v-SNARE homology domain. Part of a complex that contains STXBP5, STX4A and SNAP23. Detected in heart, spleen, lung, skeletal muscle, liver and kidney (at protein level). Detected in brain, particularly in the olfactory bulb and in hippocampus. Detected in the tenia tecta and in the piriform layer of the brain cortex.

The protein localises to the cytoplasm. It localises to the cell membrane. The protein resides in the membrane. Functionally, plays a regulatory role in calcium-dependent exocytosis and neurotransmitter release. Inhibits membrane fusion between transport vesicles and the plasma membrane. May modulate the assembly of trans-SNARE complexes between transport vesicles and the plasma membrane. Competes with STXBP1 for STX1 binding. Inhibits translocation of GLUT4 from intracellular vesicles to the plasma membrane. The sequence is that of Syntaxin-binding protein 5 (Stxbp5) from Mus musculus (Mouse).